The following is a 477-amino-acid chain: MAQGNNYGQTSNGVAEESPNMLVYRKMEDVIARMQDEKNGIPIRTVKSFLSKIPSVFSGSDIVQWLIKNLTIEDPVEALHLGTLMAAHGYFFPISDHVLTLKDDGTFYRFQTPYFWPSNCWEPENTDYAVYLCKRTMQNKARLELADYEAESLARLQRAFARKWEFIFMQAEAQAKVDKKRDKIERKILDSQERAFWDVHRPVPGCVNTTEVDIKKSSRMRNPHKTRKSVYGLQNDIRSHSPTHTPTPETKPPTEDELHRQIKYWQIQLDRHRLKMSKVADSLLSYTEQYVEYDPFLVPPDPSNPWLSDDTTFWELEASKEPSQQRVKRWGFGMDEALKDPVGREQFLKFLESEFSSENLRFWLAVEDLKKRPIREVPSRVQEIWQEFLAPGAPSAINLDSKSYDKTTQNVKEPGRYTFEDAQEHIYKLMKSDSYPRFIRSSAYQELLQAKRKGRNIPIFPCHKNCTPTLRASTNLL.

One can recognise a DEP domain in the interval 37–112 (EKNGIPIRTV…DDGTFYRFQT (76 aa)). A phosphoserine mark is found at S229 and S241. Residues 236–257 (DIRSHSPTHTPTPETKPPTEDE) are disordered. T243 carries the phosphothreonine modification. In terms of domain architecture, G protein gamma spans 255–316 (EDELHRQIKY…LSDDTTFWEL (62 aa)). The RGS domain occupies 333-448 (GMDEALKDPV…IRSSAYQELL (116 aa)). S434 carries the phosphoserine modification.

Interacts with GNB5, forming the RGS7-GNB5 complex. Interacts with GPR158; promotes the GTPase activator activity of the RGS7-GNB5 complex in absence of glycine, in contrast GTPase activator activity of the RGS7-GNB5 complex is inhibited in presence of glycine. Interacts with GPR179. Interacts with PKD1; this prevents rapid proteasomal degradation. Interacts with RGS7BP, leading to regulate the subcellular location of the heterodimer formed with GNB5. Interacts (phosphorylated form) with 14-3-3 protein YWHAQ. Interacts with SNAPIN. Interacts with GNAI1. Interacts with GNAO1, GNAI3 and GNAZ. Post-translationally, palmitoylated. In terms of processing, ubiquitinated, leading to rapid proteasomal degradation. Phosphorylation and subsequent interaction with 14-3-3 proteins inhibits GAP activity. As to expression, brain-specific. Predominantly cerebellar granule cells.

The protein localises to the cytoplasm. It is found in the cytosol. Its subcellular location is the cell membrane. It localises to the membrane. In terms of biological role, GTPase activator component of the RGS7-GNB5 complex that regulates G protein-coupled receptor signaling cascades. The RGS7-GNB5 complex acts as an inhibitor signal transduction by promoting the GTPase activity of G protein alpha subunits, such as GNAO1, thereby driving them into their inactive GDP-bound form. May play a role in synaptic vesicle exocytosis. Glycine-dependent regulation of the RGS7-GNB5 complex by GPR158 affects mood and cognition via its ability to regulate neuronal excitability in L2/L3 pyramidal neurons of the prefrontal cortex. Modulates the activity of potassium channels that are activated by GNAO1 in response to muscarinic acetylcholine receptor M2/CHRM2 signaling. This Rattus norvegicus (Rat) protein is Regulator of G-protein signaling 7 (Rgs7).